Consider the following 289-residue polypeptide: Protoheme IX farnesyltransferase (289 aa).

9 helical membrane passes run 9–29, 35–55, 89–109, 110–130, 138–158, 164–184, 188–208, 228–248, and 269–289; these read VALM…PVMM, MPSL…AGSA, LTFG…LVNW, PSAL…TLGL, IVIG…AVTG, AVLL…ALAM, DDYA…EVVT, VAHT…WFLA, and FHMS…TAVV.

It belongs to the UbiA prenyltransferase family. Protoheme IX farnesyltransferase subfamily.

Its subcellular location is the cell membrane. The enzyme catalyses heme b + (2E,6E)-farnesyl diphosphate + H2O = Fe(II)-heme o + diphosphate. Its pathway is porphyrin-containing compound metabolism; heme O biosynthesis; heme O from protoheme: step 1/1. Its function is as follows. Converts heme B (protoheme IX) to heme O by substitution of the vinyl group on carbon 2 of heme B porphyrin ring with a hydroxyethyl farnesyl side group. The sequence is that of Protoheme IX farnesyltransferase from Frankia alni (strain DSM 45986 / CECT 9034 / ACN14a).